Reading from the N-terminus, the 458-residue chain is UDP-N-acetylmuramate--L-alanine ligase (458 aa).

Gly-118–Thr-124 provides a ligand contact to ATP.

This sequence belongs to the MurCDEF family.

It localises to the cytoplasm. It carries out the reaction UDP-N-acetyl-alpha-D-muramate + L-alanine + ATP = UDP-N-acetyl-alpha-D-muramoyl-L-alanine + ADP + phosphate + H(+). The protein operates within cell wall biogenesis; peptidoglycan biosynthesis. Functionally, cell wall formation. The chain is UDP-N-acetylmuramate--L-alanine ligase from Clostridium botulinum (strain Langeland / NCTC 10281 / Type F).